Here is a 147-residue protein sequence, read N- to C-terminus: Transcriptional repressor NrdR (147 aa).

Residues Cys-3 to Cys-34 fold into a zinc finger. Residues Pro-49–Glu-139 enclose the ATP-cone domain.

It belongs to the NrdR family. Zn(2+) serves as cofactor.

Negatively regulates transcription of bacterial ribonucleotide reductase nrd genes and operons by binding to NrdR-boxes. This is Transcriptional repressor NrdR from Methylibium petroleiphilum (strain ATCC BAA-1232 / LMG 22953 / PM1).